A 555-amino-acid polypeptide reads, in one-letter code: Undecaprenyl phosphate-alpha-4-amino-4-deoxy-L-arabinose arabinosyl transferase (555 aa).

Transmembrane regions (helical) follow at residues 6-26 (GSWA…PLNG), 87-107 (FGSV…AMLM), 116-136 (LATL…YSVL), 178-198 (FMTK…PIVI), 206-226 (LLIY…PWAL), 257-277 (APFW…LALL), 293-313 (ELFF…IAKG), 315-335 (LPTY…AYAE), 351-371 (VLNG…GSGL), 384-404 (PKIV…VVSV), and 411-431 (WSWA…AIPQ).

Belongs to the glycosyltransferase 83 family.

The protein resides in the cell inner membrane. It carries out the reaction 4-amino-4-deoxy-alpha-L-arabinopyranosyl di-trans,octa-cis-undecaprenyl phosphate + lipid IVA = lipid IIA + di-trans,octa-cis-undecaprenyl phosphate.. Its pathway is lipopolysaccharide metabolism; 4-amino-4-deoxy-beta-L-arabinose-lipid A biosynthesis. In terms of biological role, catalyzes the transfer of the L-Ara4N moiety of the glycolipid undecaprenyl phosphate-alpha-L-Ara4N to lipid A. The modified arabinose is attached to lipid A and is required for resistance to polymyxin and cationic antimicrobial peptides. The chain is Undecaprenyl phosphate-alpha-4-amino-4-deoxy-L-arabinose arabinosyl transferase from Serratia proteamaculans (strain 568).